A 268-amino-acid polypeptide reads, in one-letter code: MSRLQTRFAQLKQENRAALVTFVTAGDPDYASSLEILKGLPAAGADVIELGMPFTDPMADGPAIQLANIRALDGGQTLARTLQMVREFRSGDSETPLVLMGYFNPIHHYGVERFIAEAKEVGVDGLIVVDLPPEHNEDLCHPAQAAGLDFIRLTTPTTGDQRLPTVLEGSSGFVYYVSVAGVTGANAATLEHVEEAVARLRRHTDLPIGIGFGIRSAEHAAAVARLADGVVVGSALIDRIAKARDNAQAVKDVLALCGELAEGVRNAR.

Catalysis depends on proton acceptor residues Glu-49 and Asp-60.

This sequence belongs to the TrpA family. In terms of assembly, tetramer of two alpha and two beta chains.

The catalysed reaction is (1S,2R)-1-C-(indol-3-yl)glycerol 3-phosphate + L-serine = D-glyceraldehyde 3-phosphate + L-tryptophan + H2O. It functions in the pathway amino-acid biosynthesis; L-tryptophan biosynthesis; L-tryptophan from chorismate: step 5/5. Its function is as follows. The alpha subunit is responsible for the aldol cleavage of indoleglycerol phosphate to indole and glyceraldehyde 3-phosphate. The polypeptide is Tryptophan synthase alpha chain (Pseudomonas aeruginosa (strain UCBPP-PA14)).